A 215-amino-acid polypeptide reads, in one-letter code: MRRVLITGFEPFGGERINPSWEVVKQMNDLMMGGVRIVARQLPCAFGEALTALNTAIDDVQPVLVLAIGQAGGRADITIERVAINVDDARIPDNLGNQPVDQPIIQEGPAAYFTRLPIKAMVQGIREAGIPASVSQTAGTYVCNHVMYGLLHRLNQFNNEVKGGFIHIPYLPEQAVDHPGAPSMSAQSVLVALELAISIALQIEHDLHITGGAVH.

Active-site residues include Glu80, Cys143, and His167.

Belongs to the peptidase C15 family. As to quaternary structure, homotetramer.

The protein resides in the cytoplasm. The enzyme catalyses Release of an N-terminal pyroglutamyl group from a polypeptide, the second amino acid generally not being Pro.. Removes 5-oxoproline from various penultimate amino acid residues except L-proline. The protein is Pyrrolidone-carboxylate peptidase of Yersinia pestis bv. Antiqua (strain Antiqua).